We begin with the raw amino-acid sequence, 438 residues long: SPbeta prophage-derived uncharacterized protein YopA (438 aa).

Residues 391 to 411 traverse the membrane as a helical segment; the sequence is LHVLYLGVWYLELLTLGILGY.

It is found in the cell membrane. The protein is SPbeta prophage-derived uncharacterized protein YopA (yopA) of Bacillus subtilis (strain 168).